A 66-amino-acid chain; its full sequence is UPF0434 protein Mnod_1613 (66 aa).

It belongs to the UPF0434 family.

This is UPF0434 protein Mnod_1613 from Methylobacterium nodulans (strain LMG 21967 / CNCM I-2342 / ORS 2060).